A 114-amino-acid chain; its full sequence is Small ribosomal subunit protein uS17 (114 aa).

This sequence belongs to the universal ribosomal protein uS17 family. As to quaternary structure, part of the 30S ribosomal subunit.

One of the primary rRNA binding proteins, it binds specifically to the 5'-end of 16S ribosomal RNA. The protein is Small ribosomal subunit protein uS17 of Aeropyrum pernix (strain ATCC 700893 / DSM 11879 / JCM 9820 / NBRC 100138 / K1).